A 591-amino-acid chain; its full sequence is NADPH oxidase 1 (591 aa).

At 1-36 the chain is on the cytoplasmic side; it reads MAGELRGSRGPLQRIQIAPREAPNLHLTMGNWLVNH. Residues 37–59 traverse the membrane as a helical segment; sequence WLSVLFLVSWLGLNIFLFVYAFL. Topologically, residues 60–72 are extracellular; sequence NYEKSDKYYYTRE. Residues 73 to 97 form a helical membrane-spanning segment; it reads ILGTALALARASALCLNFNSMMILI. In terms of domain architecture, Ferric oxidoreductase spans 82 to 316; it reads RASALCLNFN…YIFERILRFY (235 aa). Residues 98–130 lie on the Cytoplasmic side of the membrane; it reads PVCRNLLSFLRGTCSFCNRTLRKPLDHNLTFHK. His-129 and His-143 together coordinate heme. Residues 131–151 traverse the membrane as a helical segment; the sequence is LVAYMICIFTVIHIIAHLFNF. At 152–195 the chain is on the extracellular side; the sequence is ERYRRSQQAMDGSLASVLSSLSHPEKEDSWLNPIQSPNMTVMYA. Residue Asn-189 is glycosylated (N-linked (GlcNAc...) asparagine). A helical membrane pass occupies residues 196-216; sequence AFTSIAGLTGVIATVALVLMV. The Cytoplasmic portion of the chain corresponds to 217–234; it reads TSAMEFIRRNYFELFWYT. The chain crosses the membrane as a helical span at residues 235–255; it reads HHLFIVYIICLGIHGLGGIVR. 2 residues coordinate heme: His-236 and His-248. The Extracellular segment spans residues 256–423; it reads GQTEESLGES…TVSEDVFQYE (168 aa). The N-linked (GlcNAc...) asparagine glycan is linked to Asn-269. The 102-residue stretch at 317–418 folds into the FAD-binding FR-type domain; sequence RSQQKVVITK…DGPFGTVSED (102 aa). 365–371 contributes to the FAD binding site; it reads HPFTLTS. A helical transmembrane segment spans residues 424–444; it reads VAVLVGAGIGVTPFASILKSI. An interaction with NOXO1 region spans residues 424 to 563; that stretch reads VAVLVGAGIG…GVFLCGPRTL (140 aa). Residues 445-591 lie on the Cytoplasmic side of the membrane; it reads WYKFQRADNK…VQFYFNKETF (147 aa). At Thr-457 the chain carries Phosphothreonine.

In terms of assembly, NOX1, NOXA1, NOXO1, RAC1 and CYBA forms a functional multimeric complex supporting ROS production. Interacts with NOXO1. Interacts (via FAD-binding FR-type domain) with ARHGEF7 (via PH domain). Interacts with NOXA1. FAD is required as a cofactor. Phosphorylation at Thr-457 mediated by PKC/PRKBC positively regulates its interaction with NOXA1 and enzyme activity. In terms of tissue distribution, expressed in colon and vascular smooth muscle cells (VSMC).

It is found in the cell projection. It localises to the invadopodium membrane. The protein resides in the cell membrane. The catalysed reaction is NADPH + 2 O2 = 2 superoxide + NADP(+) + H(+). Its activity is regulated as follows. The oxidase activity is potentiated by NOXA1 and NOXO1. Its function is as follows. NADPH oxidase that catalyzes the generation of superoxide from molecular oxygen utilizing NADPH as an electron donor. In Mus musculus (Mouse), this protein is NADPH oxidase 1 (Nox1).